The primary structure comprises 261 residues: DNA repair protein RecO (261 aa).

This sequence belongs to the RecO family.

Its function is as follows. Involved in DNA repair and RecF pathway recombination. This Chlorobium phaeobacteroides (strain DSM 266 / SMG 266 / 2430) protein is DNA repair protein RecO.